The sequence spans 185 residues: Large ribosomal subunit protein uL5 (185 aa).

The protein belongs to the universal ribosomal protein uL5 family. As to quaternary structure, part of the 50S ribosomal subunit; part of the 5S rRNA/L5/L18/L25 subcomplex. Contacts the 5S rRNA and the P site tRNA. Forms a bridge to the 30S subunit in the 70S ribosome.

This is one of the proteins that bind and probably mediate the attachment of the 5S RNA into the large ribosomal subunit, where it forms part of the central protuberance. In the 70S ribosome it contacts protein S13 of the 30S subunit (bridge B1b), connecting the 2 subunits; this bridge is implicated in subunit movement. Contacts the P site tRNA; the 5S rRNA and some of its associated proteins might help stabilize positioning of ribosome-bound tRNAs. The chain is Large ribosomal subunit protein uL5 from Phocaeicola vulgatus (strain ATCC 8482 / DSM 1447 / JCM 5826 / CCUG 4940 / NBRC 14291 / NCTC 11154) (Bacteroides vulgatus).